A 216-amino-acid polypeptide reads, in one-letter code: GTPase IMAP family member GIMD1 (216 aa).

Residues 5 to 216 (KMIINLAVLG…ENHFQVLSFT (212 aa)) form the AIG1-type G domain. Residues 14 to 22 (GKTQSGKSS), Ser-35, and 147 to 149 (HAE) contribute to the GTP site.

Belongs to the TRAFAC class TrmE-Era-EngA-EngB-Septin-like GTPase superfamily. AIG1/Toc34/Toc159-like paraseptin GTPase family. IAN subfamily.

The protein is GTPase IMAP family member GIMD1 (Gimd1) of Rattus norvegicus (Rat).